The sequence spans 340 residues: Probable complex I intermediate-associated protein 30, mitochondrial (340 aa).

This sequence belongs to the CIA30 family.

It is found in the mitochondrion. In terms of biological role, chaperone protein involved in the assembly of the mitochondrial NADH:ubiquinone oxidoreductase complex (complex I). Required for normal growth and reproduction. This is Probable complex I intermediate-associated protein 30, mitochondrial (nuaf-1) from Caenorhabditis elegans.